Here is a 175-residue protein sequence, read N- to C-terminus: Respiratory supercomplex factor 1-B, mitochondrial (175 aa).

An HIG1 domain is found at 3–94; it reads DQADVLADPD…TERKQRREFE (92 aa). A run of 2 helical transmembrane segments spans residues 30–46 and 66–83; these read PLIP…LYRA and IYAQ…GMYY. Positions 83–115 form a coiled coil; it reads YKTERKQRREFEKKVEERKAQEKRDAWLRELEA.

The protein belongs to the RCF1 family. In terms of assembly, associates with the respiratory chain complex III/complex IV supercomplex.

It localises to the mitochondrion membrane. Its function is as follows. Cytochrome c oxidase subunit which plays a role in assembly of respiratory supercomplexes. This is Respiratory supercomplex factor 1-B, mitochondrial (rcf1-B) from Talaromyces marneffei (strain ATCC 18224 / CBS 334.59 / QM 7333) (Penicillium marneffei).